The following is a 1040-amino-acid chain: Multidrug resistance protein MdtB (1040 aa).

Helical transmembrane passes span 25–45, 347–367, 369–389, 396–416, 440–460, 472–492, 537–557, 869–889, 890–910, 911–931, 968–988, and 998–1018; these read LLMA…PVAA, LMLA…NIPA, IIPG…MVFL, LTLM…IVVI, IGFT…PLLF, FAVT…TLTP, WLTL…WIVI, LIVA…ESFI, HPIT…LALM, IAGS…IGIV, ILMT…STGV, and IAMV…TPVI.

This sequence belongs to the resistance-nodulation-cell division (RND) (TC 2.A.6) family. MdtB subfamily. As to quaternary structure, part of a tripartite efflux system composed of MdtA, MdtB and MdtC. MdtB forms a heteromultimer with MdtC.

It is found in the cell inner membrane. This Salmonella arizonae (strain ATCC BAA-731 / CDC346-86 / RSK2980) protein is Multidrug resistance protein MdtB.